A 531-amino-acid chain; its full sequence is Laccase-4 (531 aa).

An N-terminal signal peptide occupies residues 1-19 (MLSSITLLPLLAAVSTPAF). Plastocyanin-like domains follow at residues 23-146 (RNYK…LVIY), 158-315 (VDDA…LHYE), and 384-507 (SLPT…VSSR). A glycan (N-linked (GlcNAc...) asparagine) is linked at asparagine 66. Residues histidine 83 and histidine 85 each contribute to the Cu cation site. Cysteine 104 and cysteine 528 are joined by a disulfide. Asparagine 109 carries N-linked (GlcNAc...) asparagine glycosylation. The Cu cation site is built by histidine 128 and histidine 130. N-linked (GlcNAc...) asparagine glycans are attached at residues asparagine 186, asparagine 231, asparagine 280, and asparagine 395. Residues histidine 427, histidine 430, histidine 432, histidine 479, cysteine 480, and histidine 481 each contribute to the Cu cation site.

Belongs to the multicopper oxidase family. As to quaternary structure, homodimer. It depends on Cu cation as a cofactor. As to expression, in mycelia, at a higher level than LCC1, LCC2 and LCC3.

Its subcellular location is the secreted. The catalysed reaction is 4 hydroquinone + O2 = 4 benzosemiquinone + 2 H2O. Functionally, lignin degradation and detoxification of lignin-derived products. The sequence is that of Laccase-4 (LCC4) from Thanatephorus cucumeris (Black scurf of potato).